The sequence spans 83 residues: Short neurotoxin 1 (83 aa).

The N-terminal stretch at 1–21 (MKTLLLTLVVVTIVCLDLGYT) is a signal peptide. 4 disulfides stabilise this stretch: cysteine 24–cysteine 45, cysteine 38–cysteine 62, cysteine 64–cysteine 75, and cysteine 76–cysteine 81.

It belongs to the three-finger toxin family. Short-chain subfamily. Type I alpha-neurotoxin sub-subfamily. Expressed by the venom gland.

It is found in the secreted. In terms of biological role, binds to muscle nicotinic acetylcholine receptor (nAChR) and inhibit acetylcholine from binding to the receptor, thereby impairing neuromuscular transmission. The sequence is that of Short neurotoxin 1 from Pseudechis australis (Mulga snake).